Here is a 222-residue protein sequence, read N- to C-terminus: CASP-like protein 1E1 (222 aa).

Topologically, residues 1–59 (MEASRVKPGFNGVGMAAGSVNGSSRRPGPGLGYGYGYYMGSGAAAGGSGRAAQAPVDGC) are cytoplasmic. The chain crosses the membrane as a helical span at residues 60-80 (SVALRVFVVASTLVSAVVMGV). Residues 81 to 110 (DRQTRTIQITITDALPPLEVPLTANWSYSS) lie on the Extracellular side of the membrane. Asparagine 105 carries an N-linked (GlcNAc...) asparagine glycan. The helical transmembrane segment at 111-131 (AFVYFVVANAMVCLFSAAALA) threads the bilayer. At 132-146 (ACRSRAAMVPVMVGD) the chain is on the cytoplasmic side. Residues 147–167 (LLALALLYSAVGAAAEFGILG) traverse the membrane as a helical segment. Topologically, residues 168–189 (ERGNSHVRWAKVCNVYGRFCDR) are extracellular. The helical transmembrane segment at 190–210 (AMAAVIVSLIGAFANLVLLML) threads the bilayer. Topologically, residues 211–222 (NILTIHKSSSYY) are cytoplasmic.

This sequence belongs to the Casparian strip membrane proteins (CASP) family. As to quaternary structure, homodimer and heterodimers.

The protein localises to the cell membrane. This is CASP-like protein 1E1 from Sorghum bicolor (Sorghum).